Here is a 234-residue protein sequence, read N- to C-terminus: Mitochondrial assembly of ribosomal large subunit protein 1 (234 aa).

Positions 63 to 88 (SEPGLEERAEGTVNEGRPESDAADHT) are disordered.

This sequence belongs to the Iojap/RsfS family. As to quaternary structure, associates with the mitochondrial ribosome large subunit (39S) via interaction with MRPL12 and/or MRPL14. The interaction generates steric hindrance that is expected to prevent premature association of the 28S and 39S ribosomal subunits. Interacts with intermediates of the mitochondrial ribosome large subunit (mt-LSU) (recruits the mitochondrial ribosome and complex I assembly factor AltMIEF1 and NDUFAB1); regulates mitochondrial ribosomes assembly. Interacts with MRPL12 and MRPL14.

It is found in the mitochondrion matrix. Required for normal mitochondrial ribosome function and mitochondrial translation. May play a role in ribosome biogenesis by preventing premature association of the 28S and 39S ribosomal subunits. Interacts with mitochondrial ribosomal protein uL14m (MRPL14), probably blocking formation of intersubunit bridge B8, preventing association of the 28S and 39S ribosomal subunits. Addition to isolated mitochondrial ribosomal subunits partially inhibits translation, probably by interfering with the association of the 28S and 39S ribosomal subunits and the formation of functional ribosomes. May also participate in the assembly and/or regulation of the stability of the large subunit of the mitochondrial ribosome. May function as a ribosomal silencing factor. This Homo sapiens (Human) protein is Mitochondrial assembly of ribosomal large subunit protein 1 (MALSU1).